Reading from the N-terminus, the 396-residue chain is Phosphoglycerate kinase (396 aa).

Substrate contacts are provided by residues 21–23 (DFN), R36, 59–62 (HLGK), R119, and R156. ATP contacts are provided by residues K206, E325, and 352–355 (GGDS).

Belongs to the phosphoglycerate kinase family. As to quaternary structure, monomer.

Its subcellular location is the cytoplasm. The catalysed reaction is (2R)-3-phosphoglycerate + ATP = (2R)-3-phospho-glyceroyl phosphate + ADP. It participates in carbohydrate degradation; glycolysis; pyruvate from D-glyceraldehyde 3-phosphate: step 2/5. In Macrococcus caseolyticus (strain JCSC5402) (Macrococcoides caseolyticum), this protein is Phosphoglycerate kinase.